Reading from the N-terminus, the 518-residue chain is Protein nucleotidyltransferase YdiU (518 aa).

Glycine 99, glycine 101, arginine 102, lysine 122, aspartate 134, glycine 135, arginine 192, and arginine 199 together coordinate ATP. Aspartate 270 (proton acceptor) is an active-site residue. Asparagine 271 and aspartate 280 together coordinate Mg(2+). Residue aspartate 280 participates in ATP binding.

This sequence belongs to the SELO family. It depends on Mg(2+) as a cofactor. The cofactor is Mn(2+).

It carries out the reaction L-seryl-[protein] + ATP = 3-O-(5'-adenylyl)-L-seryl-[protein] + diphosphate. The enzyme catalyses L-threonyl-[protein] + ATP = 3-O-(5'-adenylyl)-L-threonyl-[protein] + diphosphate. It catalyses the reaction L-tyrosyl-[protein] + ATP = O-(5'-adenylyl)-L-tyrosyl-[protein] + diphosphate. The catalysed reaction is L-histidyl-[protein] + UTP = N(tele)-(5'-uridylyl)-L-histidyl-[protein] + diphosphate. It carries out the reaction L-seryl-[protein] + UTP = O-(5'-uridylyl)-L-seryl-[protein] + diphosphate. The enzyme catalyses L-tyrosyl-[protein] + UTP = O-(5'-uridylyl)-L-tyrosyl-[protein] + diphosphate. Its function is as follows. Nucleotidyltransferase involved in the post-translational modification of proteins. It can catalyze the addition of adenosine monophosphate (AMP) or uridine monophosphate (UMP) to a protein, resulting in modifications known as AMPylation and UMPylation. The polypeptide is Protein nucleotidyltransferase YdiU (Methylobacillus flagellatus (strain ATCC 51484 / DSM 6875 / VKM B-1610 / KT)).